Consider the following 339-residue polypeptide: Annexin A2 (339 aa).

Serine 2 is modified (N-acetylserine). Residues 2–24 are S100A10-binding site; that stretch reads STVHEILCKLSLEGDHSTPASAY. Tyrosine 24 carries the phosphotyrosine; by SRC modification. Serine 26 carries the post-translational modification Phosphoserine; by PKC. Annexin repeat units follow at residues 33–104 and 105–176; these read FDAE…GLLK and TPAQ…ALAK. N6-acetyllysine; alternate is present on lysine 49. Lysine 49 is covalently cross-linked (Glycyl lysine isopeptide (Lys-Gly) (interchain with G-Cter in SUMO1); alternate). A Glycyl lysine isopeptide (Lys-Gly) (interchain with G-Cter in SUMO2); alternate cross-link involves residue lysine 49. Lysine 152 carries the post-translational modification N6-acetyllysine. A Phosphoserine modification is found at serine 184. Annexin repeat units follow at residues 189–261 and 265–336; these read ELID…NLVQ and NKPL…YLCG. At tyrosine 199 the chain carries Phosphotyrosine. Lysine 227 carries the post-translational modification N6-acetyllysine.

It belongs to the annexin family. Heterotetramer containing 2 light chains of S100A10/p11 and 2 heavy chains of ANXA2/p36. Interacts with ATP1B1. Interacts with DYSF. Interacts with COCH. Interacts (via repeat Annexin 1) with PCSK9 (via the C-terminal domain); the interaction inhibits the degradation of LDLR. Interacts with CEACAM1 (via the cytoplasmic domain); this interaction is regulated by phosphorylation of CEACAM1. Interacts with APPL2 and APPL1; targets APPL2 to endosomes and acting in parallel to RAB5A. Interacts with S100A4. May interact with UBAP2. Interacts with PLEKHG4B; this interaction is required for PLEKHG4B localization to cell-cell adhesions. In terms of assembly, (Microbial infection) Interacts with classical swine fever virus envelope glycoprotein E2. ISGylated.

The protein resides in the secreted. It is found in the extracellular space. The protein localises to the extracellular matrix. It localises to the basement membrane. Its subcellular location is the melanosome. Functionally, calcium-regulated membrane-binding protein whose affinity for calcium is greatly enhanced by anionic phospholipids. It binds two calcium ions with high affinity. May be involved in heat-stress response. Inhibits PCSK9-enhanced LDLR degradation, probably reduces PCSK9 protein levels via a translational mechanism but also competes with LDLR for binding with PCSK9. Binds to endosomes damaged by phagocytosis of particulate wear debris and participates in endosomal membrane stabilization, thereby limiting NLRP3 inflammasome activation. Required for endothelial cell surface plasmin generation and may support fibrinolytic surveillance and neoangiogenesis. (Microbial infection) May serve as a receptor for classical swine fever virus (CSFV). Promotes CSFV infection. This is Annexin A2 (ANXA2) from Sus scrofa (Pig).